A 653-amino-acid chain; its full sequence is Chaperone protein DnaK (653 aa).

Position 200 is a phosphothreonine; by autocatalysis (Thr200). The tract at residues 612–653 (QGAAGAAGAAGGAGAAAGAEAAGASQQADDVVDAEFKEVKKD) is disordered. Residues 627 to 639 (AAGAEAAGASQQA) show a composition bias toward low complexity.

The protein belongs to the heat shock protein 70 family.

Functionally, acts as a chaperone. This chain is Chaperone protein DnaK, found in Paraburkholderia phymatum (strain DSM 17167 / CIP 108236 / LMG 21445 / STM815) (Burkholderia phymatum).